We begin with the raw amino-acid sequence, 182 residues long: MAREAKGPKEGDFITIKSYKHDGSLHRTWRDTMVLKTSENVLIGCNDHTLVTEDDGRRWVTREPAIVYFHKHYWFNIVAMIRDNGVSYYCNLASPYVLDKEALKYIDYDLDVKVFPDGERRLLDVDEYEEHGAQWRYSADTDRILKANVKVLVDWIKNKKGPFSQDYIDIWYSRYQELSRRQ.

Arg-27 acts as the Proton donor in catalysis. The Mg(2+) site is built by Asn-91, Asp-107, Asp-109, Asp-111, Asp-124, and Glu-127.

The protein belongs to the Ntdp family. The cofactor is Mg(2+).

It catalyses the reaction a ribonucleoside 5'-triphosphate + H2O = a ribonucleoside 5'-diphosphate + phosphate + H(+). The catalysed reaction is a ribonucleoside 5'-diphosphate + H2O = a ribonucleoside 5'-phosphate + phosphate + H(+). In terms of biological role, has nucleoside phosphatase activity towards nucleoside triphosphates and nucleoside diphosphates. This Lactiplantibacillus plantarum (strain ATCC BAA-793 / NCIMB 8826 / WCFS1) (Lactobacillus plantarum) protein is Nucleoside triphosphate/diphosphate phosphatase.